Here is a 117-residue protein sequence, read N- to C-terminus: Cuticle protein CP1246 (117 aa).

4 repeat units span residues N1–F17, A26–F43, Q67–F84, and V93–F110.

As to expression, calcified shell.

The sequence is that of Cuticle protein CP1246 from Cancer pagurus (Rock crab).